The chain runs to 133 residues: ATP synthase epsilon chain, chloroplastic (133 aa).

It belongs to the ATPase epsilon chain family. F-type ATPases have 2 components, CF(1) - the catalytic core - and CF(0) - the membrane proton channel. CF(1) has five subunits: alpha(3), beta(3), gamma(1), delta(1), epsilon(1). CF(0) has three main subunits: a, b and c.

The protein localises to the plastid. The protein resides in the chloroplast thylakoid membrane. Its function is as follows. Produces ATP from ADP in the presence of a proton gradient across the membrane. This is ATP synthase epsilon chain, chloroplastic from Jasminum nudiflorum (Winter jasmine).